Here is a 795-residue protein sequence, read N- to C-terminus: Lon protease (795 aa).

In terms of domain architecture, Lon N-terminal spans 7 to 213; it reads PQILVVRNQV…KIIGSGIEDL (207 aa). An ATP-binding site is contributed by 379-386; it reads GPPGVGKS. Positions 615–795 constitute a Lon proteolytic domain; that stretch reads DALPGIVNGM…YKDIYNKIFN (181 aa). Residues S702 and K745 contribute to the active site.

This sequence belongs to the peptidase S16 family. As to quaternary structure, homohexamer. Organized in a ring with a central cavity.

The protein localises to the cytoplasm. It catalyses the reaction Hydrolysis of proteins in presence of ATP.. Its function is as follows. ATP-dependent serine protease that mediates the selective degradation of mutant and abnormal proteins as well as certain short-lived regulatory proteins. Required for cellular homeostasis and for survival from DNA damage and developmental changes induced by stress. Degrades polypeptides processively to yield small peptide fragments that are 5 to 10 amino acids long. Binds to DNA in a double-stranded, site-specific manner. This chain is Lon protease, found in Mycoplasma pneumoniae (strain ATCC 29342 / M129 / Subtype 1) (Mycoplasmoides pneumoniae).